The sequence spans 129 residues: MAKEATRVRRRERKNIVSGVAHVNSTFNNTMITITDAQGNTISWSSAGTMGFKGSRKSTPYAAQMAAEDCARKAAEHGMRTLEVEVSGPGSGRESALRALQAAGFTVTSIRDVTPIPHNGCRPRKRRRV.

It belongs to the universal ribosomal protein uS11 family. In terms of assembly, part of the 30S ribosomal subunit. Interacts with proteins S7 and S18. Binds to IF-3.

Its function is as follows. Located on the platform of the 30S subunit, it bridges several disparate RNA helices of the 16S rRNA. Forms part of the Shine-Dalgarno cleft in the 70S ribosome. The chain is Small ribosomal subunit protein uS11 from Methylocella silvestris (strain DSM 15510 / CIP 108128 / LMG 27833 / NCIMB 13906 / BL2).